A 450-amino-acid chain; its full sequence is Probable rhamnogalacturonase E (450 aa).

The signal sequence occupies residues 1–22 (MTWSTSFLSVHFFAFITTSIHA). A disulfide bridge connects residues C43 and C69. N-linked (GlcNAc...) asparagine glycans are attached at residues N54, N92, and N131. D222 (proton donor) is an active-site residue. A disulfide bond links C224 and C241. 2 N-linked (GlcNAc...) asparagine glycosylation sites follow: N242 and N257. H297 is an active-site residue. Residues N324 and N329 are each glycosylated (N-linked (GlcNAc...) asparagine). Cystine bridges form between C347-C353 and C375-C384.

Belongs to the glycosyl hydrolase 28 family.

It is found in the secreted. In terms of biological role, pectinolytic enzymes consist of four classes of enzymes: pectine lyase, polygalacturonase, pectin methylesterase and rhamnogalacturonase. Hydrolyzes alpha-D-galacturonopyranosyl-(1,2)-alpha-L-rhamnopyranosyl linkages in the backbone of the hairy regions of pectins. This is Probable rhamnogalacturonase E (rhgE) from Aspergillus niger.